The primary structure comprises 505 residues: ATP synthase subunit alpha, chloroplastic (505 aa).

170-177 provides a ligand contact to ATP; that stretch reads GDRQTGKT.

This sequence belongs to the ATPase alpha/beta chains family. As to quaternary structure, F-type ATPases have 2 components, CF(1) - the catalytic core - and CF(0) - the membrane proton channel. CF(1) has five subunits: alpha(3), beta(3), gamma(1), delta(1), epsilon(1). CF(0) has four main subunits: a, b, b' and c.

The protein resides in the plastid. It localises to the chloroplast thylakoid membrane. It catalyses the reaction ATP + H2O + 4 H(+)(in) = ADP + phosphate + 5 H(+)(out). Functionally, produces ATP from ADP in the presence of a proton gradient across the membrane. The alpha chain is a regulatory subunit. The chain is ATP synthase subunit alpha, chloroplastic from Zygnema circumcarinatum (Green alga).